The following is a 291-amino-acid chain: Gamma-sarcoglycan (291 aa).

Over 1-37 (MVREQYTTATEGICIERPENQYVYKIGIYGWRKRCLY) the chain is Cytoplasmic. Residues 38–58 (LFVLLLLIILVVNLALTIWIL) traverse the membrane as a helical; Signal-anchor for type II membrane protein segment. At 59 to 291 (KVMWFSPAGM…TCQEHNHICL (233 aa)) the chain is on the extracellular side. A glycan (N-linked (GlcNAc...) asparagine) is linked at asparagine 110. Intrachain disulfides connect cysteine 265/cysteine 290 and cysteine 267/cysteine 283.

It belongs to the sarcoglycan beta/delta/gamma/zeta family. As to quaternary structure, interacts with the syntrophin SNTA1. Cross-link to form 2 major subcomplexes: one consisting of SGCB, SGCD and SGCG and the other consisting of SGCB and SGCD. The association between SGCB and SGCG is particularly strong while SGCA is loosely associated with the other sarcoglycans. Interacts with FLNC. In terms of tissue distribution, expressed in skeletal and heart muscle.

The protein resides in the cell membrane. It is found in the sarcolemma. The protein localises to the cytoplasm. Its subcellular location is the cytoskeleton. Functionally, component of the sarcoglycan complex, a subcomplex of the dystrophin-glycoprotein complex which forms a link between the F-actin cytoskeleton and the extracellular matrix. The polypeptide is Gamma-sarcoglycan (SGCG) (Homo sapiens (Human)).